Here is a 118-residue protein sequence, read N- to C-terminus: Small ribosomal subunit protein uS13 (118 aa).

The interval 92-118 is disordered; sequence RKGLPVRGQRTKTNARTRKGPRKPIRK.

The protein belongs to the universal ribosomal protein uS13 family. Part of the 30S ribosomal subunit. Forms a loose heterodimer with protein S19. Forms two bridges to the 50S subunit in the 70S ribosome.

Located at the top of the head of the 30S subunit, it contacts several helices of the 16S rRNA. In the 70S ribosome it contacts the 23S rRNA (bridge B1a) and protein L5 of the 50S subunit (bridge B1b), connecting the 2 subunits; these bridges are implicated in subunit movement. Contacts the tRNAs in the A and P-sites. The chain is Small ribosomal subunit protein uS13 from Pseudomonas putida (strain ATCC 700007 / DSM 6899 / JCM 31910 / BCRC 17059 / LMG 24140 / F1).